Here is a 201-residue protein sequence, read N- to C-terminus: Recombination protein RecR (201 aa).

The segment at 55–70 (CVCCGAFCEGRTCALC) adopts a C4-type zinc-finger fold. Positions 78 to 173 (GIICVVERAQ…IVTRLASGIP (96 aa)) constitute a Toprim domain.

Belongs to the RecR family.

May play a role in DNA repair. It seems to be involved in an RecBC-independent recombinational process of DNA repair. It may act with RecF and RecO. This chain is Recombination protein RecR, found in Treponema pallidum (strain Nichols).